We begin with the raw amino-acid sequence, 318 residues long: uncharacterized protein (318 aa).

Residues 67–157 (LAFDELEKEK…SLKAIQTSQE (91 aa)) adopt a coiled-coil conformation. Residues 172-318 (ESTNKVEKNA…KGFFARLFNL (147 aa)) are disordered. 2 stretches are compositionally biased toward basic and acidic residues: residues 175–193 (NKVEKNAVTEDKADSKDSK) and 219–236 (KVDKEDQISATEAIEKAS). Polar residues predominate over residues 237 to 248 (VEQSKNGNAAET). 2 stretches are compositionally biased toward basic and acidic residues: residues 249-274 (SNKEATIDAEAQHDAEQQVAEAHAEA) and 300-310 (SEPKPQEEKKG).

This is an uncharacterized protein from Staphylococcus aureus (strain MW2).